The primary structure comprises 228 residues: MDWGREFFKWRGYEETVKLQEELSKKIILEDKFKELRYIGGVDTSSLGEKIVGIITILVFKTLELVEISVALSEVNFPYIPGFLSFREGPVILRAWEKLKIKPDLLIFDGQGIAHPRRLGIASHIGYVLDVPSIGCAKNILVGFYKEPDKRKGSFEYIYHKGEIVGAAVRTKDNVKPVFVSLGHKISLNTSIDIILKTSTKYRIPEPVRLAHLYSKRMLNSEIEGEPF.

Positions 43 and 109 each coordinate Mg(2+).

The protein belongs to the endonuclease V family. It depends on Mg(2+) as a cofactor.

It is found in the cytoplasm. It catalyses the reaction Endonucleolytic cleavage at apurinic or apyrimidinic sites to products with a 5'-phosphate.. In terms of biological role, DNA repair enzyme involved in the repair of deaminated bases. Selectively cleaves double-stranded DNA at the second phosphodiester bond 3' to a deoxyinosine leaving behind the intact lesion on the nicked DNA. This Dictyoglomus turgidum (strain DSM 6724 / Z-1310) protein is Endonuclease V.